The sequence spans 354 residues: Protein RecA (354 aa).

65–72 (GPESSGKT) lines the ATP pocket.

It belongs to the RecA family.

It localises to the cytoplasm. Its function is as follows. Can catalyze the hydrolysis of ATP in the presence of single-stranded DNA, the ATP-dependent uptake of single-stranded DNA by duplex DNA, and the ATP-dependent hybridization of homologous single-stranded DNAs. It interacts with LexA causing its activation and leading to its autocatalytic cleavage. The chain is Protein RecA from Pseudomonas syringae pv. syringae (strain B728a).